The sequence spans 295 residues: Methionine aminopeptidase (295 aa).

Position 62 (histidine 62) interacts with substrate. A divalent metal cation is bound by residues aspartate 82, aspartate 93, and histidine 153. A substrate-binding site is contributed by histidine 161. Positions 187 and 280 each coordinate a divalent metal cation.

As to quaternary structure, monomer. It depends on Co(2+) as a cofactor. The cofactor is Zn(2+). Requires Mn(2+) as cofactor. Fe(2+) is required as a cofactor.

It carries out the reaction Release of N-terminal amino acids, preferentially methionine, from peptides and arylamides.. Functionally, removes the N-terminal methionine from nascent proteins. The N-terminal methionine is often cleaved when the second residue in the primary sequence is small and uncharged (Met-Ala-, Cys, Gly, Pro, Ser, Thr, or Val). This Pyrococcus furiosus (strain ATCC 43587 / DSM 3638 / JCM 8422 / Vc1) protein is Methionine aminopeptidase.